We begin with the raw amino-acid sequence, 327 residues long: Phosphate acyltransferase (327 aa).

The protein belongs to the PlsX family. As to quaternary structure, homodimer. Probably interacts with PlsY.

It localises to the cytoplasm. It catalyses the reaction a fatty acyl-[ACP] + phosphate = an acyl phosphate + holo-[ACP]. It participates in lipid metabolism; phospholipid metabolism. In terms of biological role, catalyzes the reversible formation of acyl-phosphate (acyl-PO(4)) from acyl-[acyl-carrier-protein] (acyl-ACP). This enzyme utilizes acyl-ACP as fatty acyl donor, but not acyl-CoA. This Thermotoga maritima (strain ATCC 43589 / DSM 3109 / JCM 10099 / NBRC 100826 / MSB8) protein is Phosphate acyltransferase.